Reading from the N-terminus, the 156-residue chain is Lipoprotein signal peptidase (156 aa).

A helical transmembrane segment spans residues 62–82 (GNTVFMVLSAVIIAILSYTKI). Residues Asp-115 and Asp-133 contribute to the active site. The chain crosses the membrane as a helical span at residues 126-146 (WPAFNLADLTITCGVIVFLAM).

Belongs to the peptidase A8 family.

It localises to the cell inner membrane. It carries out the reaction Release of signal peptides from bacterial membrane prolipoproteins. Hydrolyzes -Xaa-Yaa-Zaa-|-(S,diacylglyceryl)Cys-, in which Xaa is hydrophobic (preferably Leu), and Yaa (Ala or Ser) and Zaa (Gly or Ala) have small, neutral side chains.. Its pathway is protein modification; lipoprotein biosynthesis (signal peptide cleavage). Its function is as follows. This protein specifically catalyzes the removal of signal peptides from prolipoproteins. The sequence is that of Lipoprotein signal peptidase from Anaplasma phagocytophilum (strain HZ).